A 178-amino-acid polypeptide reads, in one-letter code: RNA pyrophosphohydrolase (178 aa).

The 154-residue stretch at Pro-18–Ala-171 folds into the Nudix hydrolase domain. The Nudix box motif lies at Gly-59–Gly-80.

The protein belongs to the Nudix hydrolase family. RppH subfamily. A divalent metal cation serves as cofactor.

Accelerates the degradation of transcripts by removing pyrophosphate from the 5'-end of triphosphorylated RNA, leading to a more labile monophosphorylated state that can stimulate subsequent ribonuclease cleavage. This Brucella abortus (strain 2308) protein is RNA pyrophosphohydrolase.